A 312-amino-acid chain; its full sequence is Ornithine carbamoyltransferase (312 aa).

Carbamoyl phosphate is bound by residues 60-63 (STRT), Gln87, Arg111, and 138-141 (HPCQ). Residues Asn169, Asp229, and 233-234 (SM) contribute to the L-ornithine site. Carbamoyl phosphate-binding positions include 268-269 (CL) and Arg296.

It belongs to the aspartate/ornithine carbamoyltransferase superfamily. OTCase family.

The protein resides in the cytoplasm. The catalysed reaction is carbamoyl phosphate + L-ornithine = L-citrulline + phosphate + H(+). It participates in amino-acid biosynthesis; L-arginine biosynthesis; L-arginine from L-ornithine and carbamoyl phosphate: step 1/3. Functionally, reversibly catalyzes the transfer of the carbamoyl group from carbamoyl phosphate (CP) to the N(epsilon) atom of ornithine (ORN) to produce L-citrulline. This Rhodopseudomonas palustris (strain BisA53) protein is Ornithine carbamoyltransferase.